A 155-amino-acid polypeptide reads, in one-letter code: Transcriptional repressor NrdR (155 aa).

The segment at 3 to 34 (CPFCAANDTKVIDSRLVAEGDQVRRRRECVAC) is a zinc-finger region. In terms of domain architecture, ATP-cone spans 49–139 (PRLIKQDGSR…VYRRFQDLNE (91 aa)).

It belongs to the NrdR family. It depends on Zn(2+) as a cofactor.

Negatively regulates transcription of bacterial ribonucleotide reductase nrd genes and operons by binding to NrdR-boxes. The chain is Transcriptional repressor NrdR from Ectopseudomonas mendocina (strain ymp) (Pseudomonas mendocina).